Reading from the N-terminus, the 393-residue chain is SET domain-containing protein DDB_G0283443 (393 aa).

The region spanning 17–312 is the SET domain; sequence KKIEINETLE…KGDELSISYI (296 aa).

It belongs to the class V-like SAM-binding methyltransferase superfamily.

Functionally, probable methyltransferase. In Dictyostelium discoideum (Social amoeba), this protein is SET domain-containing protein DDB_G0283443.